Consider the following 97-residue polypeptide: Putative CC-type chemokine U83 (97 aa).

2 cysteine pairs are disulfide-bonded: Cys-32/Cys-62 and Cys-33/Cys-76.

It belongs to the intercrine beta (chemokine CC) family. Highly divergent.

The sequence is that of Putative CC-type chemokine U83 (U83) from Homo sapiens (Human).